Consider the following 1099-residue polypeptide: SLIT-ROBO Rho GTPase-activating protein 3 (1099 aa).

The F-BAR domain occupies 19–314 (AQIKEIRTQL…AVDNLDSRSD (296 aa)). Residues 205-225 (HEDRPQRRSSVKKIEKMKEKR) are disordered. The stretch at 352-392 (QTELLMRYHQLQSRLATLKIENEEVRKTLDATMQTLQDMLT) forms a coiled coil. A disordered region spans residues 471–493 (ERAECGTTRPPCLPPKPQKMRRP). Residues 506–694 (GSMEAFIKDS…TIIIHHEAIF (189 aa)) form the Rho-GAP domain. Residues 744–803 (VEQIEAIAKFDYMGRSPRELSFKKGASLLLYHRASEDWWEGRHNGVDGLIPHQYIVVQDM) enclose the SH3 domain. The segment covering 809-820 (DSLSQKADSEAS) has biased composition (polar residues). The interval 809–847 (DSLSQKADSEASSGPLLDDKASSKNDLQSPTEHISDYGF) is disordered. 5 positions are modified to phosphoserine: S817, S820, S821, S837, and S858. 2 disordered regions span residues 861–911 (AAIP…SPEK) and 926–950 (PDKKALSEGHSMRSTCGSTRHSSLG). Residues 926–936 (PDKKALSEGHS) are compositionally biased toward basic and acidic residues. The segment covering 937–947 (MRSTCGSTRHS) has biased composition (polar residues). Positions 952 to 987 (HKSLEAEALAEDIEKTMSTALHELRELERQNTVKQA) form a coiled coil. Position 954 is a phosphoserine (S954). The disordered stretch occupies residues 995-1099 (LEPLKNPPGP…NSSADKSGTM (105 aa)). Composition is skewed to low complexity over residues 1026–1038 (RRSSSSSTEMMTT) and 1060–1074 (VRPVVQHRSSSSSSS). A compositionally biased stretch (polar residues) spans 1089 to 1099 (PNSSADKSGTM).

Homodimer. Forms a heterooligomer with SRGAP1 and SRGAP2 through its F-BAR domain. Interacts with WASF1. Probably interacts with ROBO1. Interacts with FASLG. Highly expressed in adult and fetal brain. Expressed at low levels in kidney. Isoform 3 is expressed in the kidney but is absent in the brain.

Its function is as follows. GTPase-activating protein for RAC1 and perhaps Cdc42, but not for RhoA small GTPase. May attenuate RAC1 signaling in neurons. This chain is SLIT-ROBO Rho GTPase-activating protein 3 (SRGAP3), found in Homo sapiens (Human).